The sequence spans 244 residues: 7-cyano-7-deazaguanine synthase (244 aa).

Residue 19–29 coordinates ATP; the sequence is FSGGQDSTTCL. Zn(2+) contacts are provided by Cys-207, Cys-222, Cys-225, and Cys-228.

Belongs to the QueC family. Zn(2+) serves as cofactor.

It catalyses the reaction 7-carboxy-7-deazaguanine + NH4(+) + ATP = 7-cyano-7-deazaguanine + ADP + phosphate + H2O + H(+). Its pathway is purine metabolism; 7-cyano-7-deazaguanine biosynthesis. Catalyzes the ATP-dependent conversion of 7-carboxy-7-deazaguanine (CDG) to 7-cyano-7-deazaguanine (preQ(0)). In Bordetella avium (strain 197N), this protein is 7-cyano-7-deazaguanine synthase.